The following is a 231-amino-acid chain: Large ribosomal subunit protein uL1 (231 aa).

The protein belongs to the universal ribosomal protein uL1 family. As to quaternary structure, part of the 50S ribosomal subunit.

Binds directly to 23S rRNA. The L1 stalk is quite mobile in the ribosome, and is involved in E site tRNA release. In terms of biological role, protein L1 is also a translational repressor protein, it controls the translation of the L11 operon by binding to its mRNA. This Acinetobacter baumannii (strain AB0057) protein is Large ribosomal subunit protein uL1.